Reading from the N-terminus, the 313-residue chain is Type II methyltransferase M.NlaX (313 aa).

The SAM-dependent MTase C5-type domain occupies 2-308 (FKIIDLFAGI…EQMKAALSAV (307 aa)). The active site involves cysteine 74.

The protein belongs to the class I-like SAM-binding methyltransferase superfamily. C5-methyltransferase family.

The catalysed reaction is a 2'-deoxycytidine in DNA + S-adenosyl-L-methionine = a 5-methyl-2'-deoxycytidine in DNA + S-adenosyl-L-homocysteine + H(+). Functionally, a methylase, recognizes the double-stranded sequence 5'-CCNGG-3' and methylates C-2 on both strands. May be the equivalent of dcm in this bacteria, or it may protect the DNA from cleavage by the putative NlaXP endonuclease. The sequence is that of Type II methyltransferase M.NlaX (nlaXM) from Neisseria lactamica.